The sequence spans 382 residues: Pregnancy-associated glycoprotein 1 (382 aa).

Residues 1–15 (MKWLVLLGLVAFSEC) form the signal peptide. Positions 16 to 53 (IVKIPLRRVKTMRNTLSGKKMLNSFLKEHAYRLSQISF) are cleaved as a propeptide — activation peptide. 2 N-linked (GlcNAc...) asparagine glycosylation sites follow: Asn-57 and Asn-74. In terms of domain architecture, Peptidase A1 spans 71–379 (YVGNITIGTP…DRGNDRIGLA (309 aa)). The cysteines at positions 102 and 110 are disulfide-linked. Residue Asn-128 is glycosylated (N-linked (GlcNAc...) asparagine). Intrachain disulfides connect Cys-263-Cys-267 and Cys-305-Cys-339.

It belongs to the peptidase A1 family. In terms of tissue distribution, trophoblast and placental tissue. Produced specifically in the invasive binucleate cells of the placenta.

It is found in the secreted. The protein resides in the extracellular space. Functionally, has no proteolytic activity. This chain is Pregnancy-associated glycoprotein 1, found in Ovis aries (Sheep).